The sequence spans 94 residues: UPF0381 protein YfcZ (94 aa).

It belongs to the UPF0381 family.

This Escherichia coli O6:H1 (strain CFT073 / ATCC 700928 / UPEC) protein is UPF0381 protein YfcZ (yfcZ).